Reading from the N-terminus, the 137-residue chain is UBAP1-MVB12-associated (UMA)-domain containing protein 1 (137 aa).

The interval 1–72 is disordered; that stretch reads MFHFFRKPPE…VSDPEMENKA (72 aa). Over residues 32-44 the composition is skewed to basic and acidic residues; the sequence is DEQRMTARGKTSD. Residues 50–63 are compositionally biased toward polar residues; that stretch reads PLETNKENSSSVTV. Residues 86–134 form the UMA domain; the sequence is LSDVPFTLAPHVLAVQGTITDLPDHLLSYDGSENLSRFWYDFTLENSVL.

The protein is UBAP1-MVB12-associated (UMA)-domain containing protein 1 of Homo sapiens (Human).